A 412-amino-acid chain; its full sequence is Ornithine cyclodeaminase (412 aa).

10 residues coordinate NAD(+): Asn-237, Ala-238, Asp-316, Thr-348, Met-349, Leu-350, His-351, Asp-369, Asp-392, and Val-393.

Belongs to the AgrE/ArgZ ornithine cyclodeaminase family. It depends on NAD(+) as a cofactor.

The catalysed reaction is L-ornithine = L-proline + NH4(+). Catalyzes the conversion of ornithine to proline, with the release of ammonia. The sequence is that of Ornithine cyclodeaminase from Methanopyrus kandleri (strain AV19 / DSM 6324 / JCM 9639 / NBRC 100938).